The following is a 269-amino-acid chain: Fructose permease IIC component (269 aa).

The region spanning 1-234 (MSSLQIILLL…GALGLCLALL (234 aa)) is the PTS EIIC type-4 domain. Helical transmembrane passes span 2–22 (SSLQIILLLIIAAITGIASVL), 35–54 (TLVGLVLGDLKTGIILGGTL), 64–86 (VGLAMAPDTAIASVISTILVITA), 90–110 (IGEGIAVAVALAAAGQALTIF), 149–169 (VMIPTLIVALISVSAVQAFLG), 181–201 (IGGGIIVVVGYAMVINMMNIP), and 206–226 (FFYIGFLLAAFTDFNLVGFGA).

Its subcellular location is the cell membrane. Its function is as follows. The phosphoenolpyruvate-dependent sugar phosphotransferase system (PTS), a major carbohydrate active -transport system, catalyzes the phosphorylation of incoming sugar substrates concomitant with their translocation across the cell membrane. This system is involved in fructose transport. This chain is Fructose permease IIC component (levF), found in Bacillus subtilis (strain 168).